Reading from the N-terminus, the 117-residue chain is MAYGVPRKNTVKTILRGSCYNVQEPWDIALLAKTWSTNLANIKLPFLEEISFGGSVQLTKCTTIKDGLLPSAESIKLEREYEVKRLCKLKCQENTSKEIQLLLRERPAGLRRPLPSK.

This is an uncharacterized protein from Homo sapiens (Human).